The chain runs to 354 residues: Bacteriochlorophyll a protein (354 aa).

Residues His-99, His-134, His-278, His-285, and His-286 each coordinate bacteriochlorophyll a.

In terms of assembly, homotrimer. Each subunit contains 7 molecules of bacteriochlorophyll a.

Its function is as follows. Intermediary in the transfer of excitation energy from the chlorophyll to the reaction centers. This is Bacteriochlorophyll a protein (fmoA) from Chlorobaculum thiosulfatiphilum (Chlorobium limicola f.sp. thiosulfatophilum).